A 201-amino-acid chain; its full sequence is MLPLLKKLYLTFARSSRIIITLVIIDQLSKWWFIDNLRWKSGLMLKVTSFLNMVYTWNYGISFGLMREYYQYSNAIFLITNTIIVCYLYYLMIRSKTIGSFAGYSFVIGGAVGNLIDRFFRGAVFDFIHFHYQNYSFPVFNLADCFIIIGVIILIEDYYSTKKVIEEKAKGNYDNAQIEAMAEKIRNTDKGGNDKIASLQN.

A run of 2 helical transmembrane segments spans residues 73-93 (SNAI…YLMI) and 97-117 (TIGS…NLID). Residues Asp-126 and Asp-144 contribute to the active site. The helical transmembrane segment at 135-155 (YSFPVFNLADCFIIIGVIILI) threads the bilayer.

It belongs to the peptidase A8 family.

It localises to the cell inner membrane. The enzyme catalyses Release of signal peptides from bacterial membrane prolipoproteins. Hydrolyzes -Xaa-Yaa-Zaa-|-(S,diacylglyceryl)Cys-, in which Xaa is hydrophobic (preferably Leu), and Yaa (Ala or Ser) and Zaa (Gly or Ala) have small, neutral side chains.. Its pathway is protein modification; lipoprotein biosynthesis (signal peptide cleavage). Its function is as follows. This protein specifically catalyzes the removal of signal peptides from prolipoproteins. The polypeptide is Lipoprotein signal peptidase (Rickettsia conorii (strain ATCC VR-613 / Malish 7)).